The sequence spans 185 residues: Ion-translocating oxidoreductase complex subunit B (185 aa).

A hydrophobic region spans residues 1–26 (MNHILLIILIFAALALIFGLLLGFAA). The 4Fe-4S domain maps to 32–90 (ESDPIVDQLDALLPQTQCGQCGYPGCRPYAEAIANGDSINKCVPGGAQTIQNIADLMGV). 12 residues coordinate [4Fe-4S] cluster: C49, C52, C57, C73, C115, C118, C121, C125, C145, C148, C151, and C155. 2 4Fe-4S ferredoxin-type domains span residues 106-135 (RVAF…GAPK) and 136-165 (LMHT…MIEL).

The protein belongs to the 4Fe4S bacterial-type ferredoxin family. RnfB subfamily. In terms of assembly, the complex is composed of six subunits: RnfA, RnfB, RnfC, RnfD, RnfE and RnfG. It depends on [4Fe-4S] cluster as a cofactor.

It is found in the cell inner membrane. Its function is as follows. Part of a membrane-bound complex that couples electron transfer with translocation of ions across the membrane. This is Ion-translocating oxidoreductase complex subunit B from Tolumonas auensis (strain DSM 9187 / NBRC 110442 / TA 4).